We begin with the raw amino-acid sequence, 271 residues long: 3-methyl-2-oxobutanoate hydroxymethyltransferase (271 aa).

Positions 51 and 90 each coordinate Mg(2+). 3-methyl-2-oxobutanoate is bound by residues 51–52 (DS), Asp-90, and Lys-118. Residue Glu-120 coordinates Mg(2+). The active-site Proton acceptor is the Glu-186.

It belongs to the PanB family. As to quaternary structure, homodecamer; pentamer of dimers. It depends on Mg(2+) as a cofactor.

It is found in the cytoplasm. The catalysed reaction is 3-methyl-2-oxobutanoate + (6R)-5,10-methylene-5,6,7,8-tetrahydrofolate + H2O = 2-dehydropantoate + (6S)-5,6,7,8-tetrahydrofolate. The protein operates within cofactor biosynthesis; (R)-pantothenate biosynthesis; (R)-pantoate from 3-methyl-2-oxobutanoate: step 1/2. Its function is as follows. Catalyzes the reversible reaction in which hydroxymethyl group from 5,10-methylenetetrahydrofolate is transferred onto alpha-ketoisovalerate to form ketopantoate. The protein is 3-methyl-2-oxobutanoate hydroxymethyltransferase of Xanthomonas campestris pv. campestris (strain B100).